A 146-amino-acid polypeptide reads, in one-letter code: Large ribosomal subunit protein uL15 (146 aa).

The segment at 1 to 56 (MKLHELKAAEGANKASKRVGRGTGSGLGKTSGKGQNGQNSRSGGGVRPGFEGGQMP) is disordered. Composition is skewed to gly residues over residues 21-35 (RGTG…GKGQ) and 42-52 (SGGGVRPGFEG).

Belongs to the universal ribosomal protein uL15 family. In terms of assembly, part of the 50S ribosomal subunit.

Functionally, binds to the 23S rRNA. The polypeptide is Large ribosomal subunit protein uL15 (Clostridium botulinum (strain Langeland / NCTC 10281 / Type F)).